The following is an 85-amino-acid chain: U4-theraphotoxin-Hhn1a (85 aa).

Residues 1 to 22 (MKVTLIAILTCATVLVLHTTAA) form the signal peptide. Residues 23–48 (EELEAESQLMEVGMPDTELAAVDEER) constitute a propeptide that is removed on maturation. 3 disulfides stabilise this stretch: C52–C66, C56–C77, and C71–C82.

It belongs to the neurotoxin 12 (Hwtx-2) family. 02 (Hwtx-2) subfamily. In terms of assembly, monomer. Expressed by the venom gland.

It localises to the secreted. Its function is as follows. Neurotoxin active on both insects and mammals. In Cyriopagopus hainanus (Chinese bird spider), this protein is U4-theraphotoxin-Hhn1a.